Reading from the N-terminus, the 426-residue chain is Tyrosine--tRNA ligase (426 aa).

Residue Tyr-36 participates in L-tyrosine binding. A 'HIGH' region motif is present at residues 41 to 50 (PTAPSLHVGH). 2 residues coordinate L-tyrosine: Tyr-174 and Gln-178. Residues 234–238 (KLGKS) carry the 'KMSKS' region motif. An ATP-binding site is contributed by Lys-237. In terms of domain architecture, S4 RNA-binding spans 359 to 416 (DGIVDLLVASGLSPSRGAARRTIDEGGVLVNNIRIQSEEWTPRTSDFLHGRWLVLRRG).

Belongs to the class-I aminoacyl-tRNA synthetase family. TyrS type 1 subfamily. As to quaternary structure, homodimer.

It localises to the cytoplasm. The enzyme catalyses tRNA(Tyr) + L-tyrosine + ATP = L-tyrosyl-tRNA(Tyr) + AMP + diphosphate + H(+). In terms of biological role, catalyzes the attachment of tyrosine to tRNA(Tyr) in a two-step reaction: tyrosine is first activated by ATP to form Tyr-AMP and then transferred to the acceptor end of tRNA(Tyr). This is Tyrosine--tRNA ligase from Mycobacterium leprae (strain TN).